Here is a 269-residue protein sequence, read N- to C-terminus: Rhamnulose-1-phosphate aldolase (269 aa).

Residue E119 is part of the active site. 3 residues coordinate Zn(2+): H142, H144, and H214.

It belongs to the aldolase class II family. RhaD subfamily. Zn(2+) is required as a cofactor.

Its subcellular location is the cytoplasm. The catalysed reaction is L-rhamnulose 1-phosphate = (S)-lactaldehyde + dihydroxyacetone phosphate. Its pathway is carbohydrate degradation; L-rhamnose degradation; glycerone phosphate from L-rhamnose: step 3/3. Functionally, catalyzes the reversible cleavage of L-rhamnulose-1-phosphate to dihydroxyacetone phosphate (DHAP) and L-lactaldehyde. The chain is Rhamnulose-1-phosphate aldolase from Bacteroides thetaiotaomicron (strain ATCC 29148 / DSM 2079 / JCM 5827 / CCUG 10774 / NCTC 10582 / VPI-5482 / E50).